The primary structure comprises 227 residues: tRNA (guanine-N(7)-)-methyltransferase (227 aa).

The tract at residues 1-21 (MPDMTMKSQPDRLYGRQRGHA) is disordered. S-adenosyl-L-methionine is bound by residues glutamate 54, glutamate 79, aspartate 114, and aspartate 136. Aspartate 136 is a catalytic residue. Substrate contacts are provided by residues lysine 140, aspartate 172, and 206–209 (TRYE).

Belongs to the class I-like SAM-binding methyltransferase superfamily. TrmB family.

The enzyme catalyses guanosine(46) in tRNA + S-adenosyl-L-methionine = N(7)-methylguanosine(46) in tRNA + S-adenosyl-L-homocysteine. The protein operates within tRNA modification; N(7)-methylguanine-tRNA biosynthesis. Its function is as follows. Catalyzes the formation of N(7)-methylguanine at position 46 (m7G46) in tRNA. This is tRNA (guanine-N(7)-)-methyltransferase from Granulibacter bethesdensis (strain ATCC BAA-1260 / CGDNIH1).